We begin with the raw amino-acid sequence, 83 residues long: Heterin-1 (83 aa).

A signal peptide spans methionine 1–alanine 22. The propeptide occupies valine 66–proline 83.

It belongs to the non-disulfide-bridged peptide (NDBP) superfamily. Long chain multifunctional peptide (group 2) family. Expressed by the venom gland.

Its subcellular location is the secreted. It localises to the target cell membrane. Its function is as follows. Amphipathic peptide with potent activities against both Gram-positive and Gram-negative bacteria. Is the most active against the two Gram-positive Bacillus megaterium and Micrococcus luteus (MIC=4.0 uM for both). It has relatively low hemolytic activity against human erythrocytes. This chain is Heterin-1, found in Heterometrus spinifer (Asia giant forest scorpion).